The primary structure comprises 288 residues: MAWRDRRGALRAILTGSACVRPASVYDAISIRIADDLGFPFGMFGGSVASLAILGDPDIALITLTELAEQVRRMSRAAALPVVVDADHGYGNALNVRRTVEELEAAGAAGLTIEDTLLPQAYGEAKPQLVSREEGLGKITAALDARRDPNLVIIGRTGACSITSLDDAIERALAYQAAGVDALFFTGVKTRAQLEAISAATTLPIALGSPPAELGDFDHLAERRVRIAVQGHAPIAAATEAVFKTLSAIKDGAAPKALTGLASAELMDKVTRADVVAERGEHFLGVKR.

Serine 47 contributes to the substrate binding site. Residue aspartate 85 participates in Mg(2+) binding. The substrate site is built by arginine 156 and histidine 232.

It belongs to the isocitrate lyase/PEP mutase superfamily. Oxaloacetate decarboxylase family. As to quaternary structure, homotetramer; dimer of dimers. Mg(2+) serves as cofactor.

It carries out the reaction oxaloacetate + H(+) = pyruvate + CO2. Its function is as follows. Catalyzes the decarboxylation of oxaloacetate into pyruvate. Seems to play a role in maintaining cellular concentrations of bicarbonate and pyruvate. This is Oxaloacetate decarboxylase from Rhodopseudomonas palustris (strain TIE-1).